A 234-amino-acid polypeptide reads, in one-letter code: Thiamine-phosphate synthase (234 aa).

4-amino-2-methyl-5-(diphosphooxymethyl)pyrimidine is bound by residues 65 to 69 (QYRNK) and N97. The Mg(2+) site is built by D98 and D117. S136 contacts 4-amino-2-methyl-5-(diphosphooxymethyl)pyrimidine. 163 to 165 (SHT) contributes to the 2-[(2R,5Z)-2-carboxy-4-methylthiazol-5(2H)-ylidene]ethyl phosphate binding site. K166 lines the 4-amino-2-methyl-5-(diphosphooxymethyl)pyrimidine pocket. Residues G192 and 212-213 (IS) contribute to the 2-[(2R,5Z)-2-carboxy-4-methylthiazol-5(2H)-ylidene]ethyl phosphate site.

Belongs to the thiamine-phosphate synthase family. Mg(2+) is required as a cofactor.

The catalysed reaction is 2-[(2R,5Z)-2-carboxy-4-methylthiazol-5(2H)-ylidene]ethyl phosphate + 4-amino-2-methyl-5-(diphosphooxymethyl)pyrimidine + 2 H(+) = thiamine phosphate + CO2 + diphosphate. It carries out the reaction 2-(2-carboxy-4-methylthiazol-5-yl)ethyl phosphate + 4-amino-2-methyl-5-(diphosphooxymethyl)pyrimidine + 2 H(+) = thiamine phosphate + CO2 + diphosphate. It catalyses the reaction 4-methyl-5-(2-phosphooxyethyl)-thiazole + 4-amino-2-methyl-5-(diphosphooxymethyl)pyrimidine + H(+) = thiamine phosphate + diphosphate. It functions in the pathway cofactor biosynthesis; thiamine diphosphate biosynthesis; thiamine phosphate from 4-amino-2-methyl-5-diphosphomethylpyrimidine and 4-methyl-5-(2-phosphoethyl)-thiazole: step 1/1. Functionally, condenses 4-methyl-5-(beta-hydroxyethyl)thiazole monophosphate (THZ-P) and 2-methyl-4-amino-5-hydroxymethyl pyrimidine pyrophosphate (HMP-PP) to form thiamine monophosphate (TMP). This Xylella fastidiosa (strain Temecula1 / ATCC 700964) protein is Thiamine-phosphate synthase.